Reading from the N-terminus, the 428-residue chain is Histidine--tRNA ligase (428 aa).

It belongs to the class-II aminoacyl-tRNA synthetase family. Homodimer.

The protein resides in the cytoplasm. It catalyses the reaction tRNA(His) + L-histidine + ATP = L-histidyl-tRNA(His) + AMP + diphosphate + H(+). The protein is Histidine--tRNA ligase of Thermosynechococcus vestitus (strain NIES-2133 / IAM M-273 / BP-1).